A 78-amino-acid chain; its full sequence is uncharacterized protein (78 aa).

Positions 1 to 22 are cleaved as a signal peptide; sequence MFKKSVLFATLLSGVMAFSTNA.

It belongs to the BhsA/McbA family.

It localises to the periplasm. Probably involved in reactive chlorine species (RCS) stress resistance. This is an uncharacterized protein from Escherichia coli (strain K12).